Consider the following 721-residue polypeptide: Polyphosphate kinase (721 aa).

N47 serves as a coordination point for ATP. Residues R377 and R407 each coordinate Mg(2+). H437 acts as the Phosphohistidine intermediate in catalysis. The ATP site is built by Y471, R567, and H595.

The protein belongs to the polyphosphate kinase 1 (PPK1) family. Mg(2+) is required as a cofactor. In terms of processing, an intermediate of this reaction is the autophosphorylated ppk in which a phosphate is covalently linked to a histidine residue through a N-P bond.

The enzyme catalyses [phosphate](n) + ATP = [phosphate](n+1) + ADP. Its function is as follows. Catalyzes the reversible transfer of the terminal phosphate of ATP to form a long-chain polyphosphate (polyP). In Exiguobacterium sp. (strain ATCC BAA-1283 / AT1b), this protein is Polyphosphate kinase.